The primary structure comprises 647 residues: Neuronal PAS domain-containing protein 4-like (647 aa).

The interval 16–29 (KRFRSTKGASKARR) is basic motif; degenerate. Residues 16–67 (KRFRSTKGASKARRDQMNSEIRNLRALLPISPEHRLSYLHSMSITCTYIRKS) form the bHLH domain. Positions 30 to 67 (DQMNSEIRNLRALLPISPEHRLSYLHSMSITCTYIRKS) are helix-loop-helix motif. 2 consecutive PAS domains span residues 117–181 (VLQA…SPSG) and 238–274 (SADM…HPDD).

As to quaternary structure, heterodimer; efficient DNA binding requires dimerization with another bHLH protein. As to expression, specifically expressed in endothelial and hematopoietic precursor cells.

Its subcellular location is the nucleus. Its function is as follows. Transcription factor specifically expressed in endothelial and hematopoietic precursor cells that acts as a key regulator of the endothelial differentiation cascade. Acts as an early-response transcription factor that regulates the expression of early regulators of endothelial and haematopoietic differentiation, such as etv2 and tal1. The polypeptide is Neuronal PAS domain-containing protein 4-like (Danio rerio (Zebrafish)).